Here is a 354-residue protein sequence, read N- to C-terminus: Uroporphyrinogen decarboxylase (354 aa).

Residues Arg27–Arg31, Asp77, Tyr154, Thr209, and His327 each bind substrate.

It belongs to the uroporphyrinogen decarboxylase family. As to quaternary structure, homodimer.

It is found in the cytoplasm. It carries out the reaction uroporphyrinogen III + 4 H(+) = coproporphyrinogen III + 4 CO2. Its pathway is porphyrin-containing compound metabolism; protoporphyrin-IX biosynthesis; coproporphyrinogen-III from 5-aminolevulinate: step 4/4. Catalyzes the decarboxylation of four acetate groups of uroporphyrinogen-III to yield coproporphyrinogen-III. This is Uroporphyrinogen decarboxylase from Pseudomonas putida (strain GB-1).